The chain runs to 528 residues: Benzoylformate decarboxylase (528 aa).

Asparagine 117, leucine 118, and arginine 120 together coordinate Mg(2+). The tract at residues 377 to 460 is thiamine pyrophosphate binding; it reads TSTTAQMWQR…VIMNNGTYGA (84 aa). Residues aspartate 428, asparagine 455, and threonine 457 each coordinate Ca(2+).

This sequence belongs to the TPP enzyme family. Homotetramer. Ca(2+) is required as a cofactor. Thiamine diphosphate serves as cofactor. The cofactor is Mg(2+).

It catalyses the reaction phenylglyoxylate + H(+) = benzaldehyde + CO2. Its pathway is aromatic compound metabolism; (R)-mandelate degradation; benzoate from (R)-mandelate: step 3/4. This is Benzoylformate decarboxylase (mdlC) from Pseudomonas putida (Arthrobacter siderocapsulatus).